A 138-amino-acid chain; its full sequence is Nucleoside diphosphate kinase (138 aa).

ATP contacts are provided by lysine 11, phenylalanine 59, arginine 87, threonine 93, arginine 104, and asparagine 114. The Pros-phosphohistidine intermediate role is filled by histidine 117.

The protein belongs to the NDK family. The cofactor is Mg(2+).

The protein localises to the cytoplasm. The enzyme catalyses a 2'-deoxyribonucleoside 5'-diphosphate + ATP = a 2'-deoxyribonucleoside 5'-triphosphate + ADP. It carries out the reaction a ribonucleoside 5'-diphosphate + ATP = a ribonucleoside 5'-triphosphate + ADP. In terms of biological role, major role in the synthesis of nucleoside triphosphates other than ATP. The ATP gamma phosphate is transferred to the NDP beta phosphate via a ping-pong mechanism, using a phosphorylated active-site intermediate. This is Nucleoside diphosphate kinase from Saccharolobus islandicus (strain Y.N.15.51 / Yellowstone #2) (Sulfolobus islandicus).